Consider the following 415-residue polypeptide: Serine hydroxymethyltransferase 2 (415 aa).

(6S)-5,6,7,8-tetrahydrofolate-binding positions include Leu-121 and 125–127; that span reads GHL. At Lys-229 the chain carries N6-(pyridoxal phosphate)lysine.

Belongs to the SHMT family. In terms of assembly, homodimer. The cofactor is pyridoxal 5'-phosphate.

Its subcellular location is the cytoplasm. The enzyme catalyses (6R)-5,10-methylene-5,6,7,8-tetrahydrofolate + glycine + H2O = (6S)-5,6,7,8-tetrahydrofolate + L-serine. It participates in one-carbon metabolism; tetrahydrofolate interconversion. The protein operates within amino-acid biosynthesis; glycine biosynthesis; glycine from L-serine: step 1/1. Catalyzes the reversible interconversion of serine and glycine with tetrahydrofolate (THF) serving as the one-carbon carrier. This reaction serves as the major source of one-carbon groups required for the biosynthesis of purines, thymidylate, methionine, and other important biomolecules. Also exhibits THF-independent aldolase activity toward beta-hydroxyamino acids, producing glycine and aldehydes, via a retro-aldol mechanism. This chain is Serine hydroxymethyltransferase 2, found in Bordetella parapertussis (strain 12822 / ATCC BAA-587 / NCTC 13253).